A 333-amino-acid polypeptide reads, in one-letter code: Fructose-1,6-bisphosphatase class 1 (333 aa).

Mg(2+)-binding residues include Glu92, Asp114, Leu116, and Asp117. Residues 117 to 120 (DGSS) and Asn209 each bind substrate. Glu279 provides a ligand contact to Mg(2+).

This sequence belongs to the FBPase class 1 family. Homotetramer. Mg(2+) serves as cofactor.

The protein localises to the cytoplasm. The enzyme catalyses beta-D-fructose 1,6-bisphosphate + H2O = beta-D-fructose 6-phosphate + phosphate. The protein operates within carbohydrate biosynthesis; gluconeogenesis. This Alkalilimnicola ehrlichii (strain ATCC BAA-1101 / DSM 17681 / MLHE-1) protein is Fructose-1,6-bisphosphatase class 1.